The sequence spans 255 residues: tRNA (guanine-N(7)-)-methyltransferase (255 aa).

Residues E64, E89, D116, and D138 each coordinate S-adenosyl-L-methionine. D138 is an active-site residue. Substrate-binding positions include K142, D174, and 212–215 (TRYE).

It belongs to the class I-like SAM-binding methyltransferase superfamily. TrmB family.

The enzyme catalyses guanosine(46) in tRNA + S-adenosyl-L-methionine = N(7)-methylguanosine(46) in tRNA + S-adenosyl-L-homocysteine. It participates in tRNA modification; N(7)-methylguanine-tRNA biosynthesis. Catalyzes the formation of N(7)-methylguanine at position 46 (m7G46) in tRNA. The chain is tRNA (guanine-N(7)-)-methyltransferase from Rhodospirillum rubrum (strain ATCC 11170 / ATH 1.1.1 / DSM 467 / LMG 4362 / NCIMB 8255 / S1).